The chain runs to 426 residues: Histidine--tRNA ligase (426 aa).

Belongs to the class-II aminoacyl-tRNA synthetase family. As to quaternary structure, homodimer.

The protein resides in the cytoplasm. The enzyme catalyses tRNA(His) + L-histidine + ATP = L-histidyl-tRNA(His) + AMP + diphosphate + H(+). The polypeptide is Histidine--tRNA ligase (Streptococcus agalactiae serotype Ia (strain ATCC 27591 / A909 / CDC SS700)).